The sequence spans 205 residues: Recombination protein RecR (205 aa).

A C4-type zinc finger spans residues 59 to 74 (CARCNTFCEGGLCDIC). Residues 82–177 (RRLMVVHMPA…KVSRLSQGIP (96 aa)) form the Toprim domain.

Belongs to the RecR family.

May play a role in DNA repair. It seems to be involved in an RecBC-independent recombinational process of DNA repair. It may act with RecF and RecO. The sequence is that of Recombination protein RecR from Neisseria gonorrhoeae (strain ATCC 700825 / FA 1090).